The sequence spans 78 residues: Small ribosomal subunit protein bS18 (78 aa).

This sequence belongs to the bacterial ribosomal protein bS18 family. As to quaternary structure, part of the 30S ribosomal subunit. Forms a tight heterodimer with protein bS6.

Its function is as follows. Binds as a heterodimer with protein bS6 to the central domain of the 16S rRNA, where it helps stabilize the platform of the 30S subunit. The polypeptide is Small ribosomal subunit protein bS18 (Lactobacillus delbrueckii subsp. bulgaricus (strain ATCC 11842 / DSM 20081 / BCRC 10696 / JCM 1002 / NBRC 13953 / NCIMB 11778 / NCTC 12712 / WDCM 00102 / Lb 14)).